The primary structure comprises 163 residues: Nucleotide-binding protein Dhaf_3127 (163 aa).

This sequence belongs to the YajQ family.

Nucleotide-binding protein. The protein is Nucleotide-binding protein Dhaf_3127 of Desulfitobacterium hafniense (strain DSM 10664 / DCB-2).